The primary structure comprises 398 residues: Elongation factor Tu (398 aa).

The tr-type G domain occupies 10 to 207 (KPHVNIGTIG…TVDSYIPEPE (198 aa)). The G1 stretch occupies residues 19-26 (GHVDHGKT). GTP is bound at residue 19-26 (GHVDHGKT). Threonine 26 contributes to the Mg(2+) binding site. The tract at residues 63-67 (GITIN) is G2. The tract at residues 84-87 (DAPG) is G3. GTP-binding positions include 84-88 (DAPGH) and 139-142 (NKVD). Residues 139–142 (NKVD) form a G4 region. The tract at residues 177-179 (SAL) is G5.

It belongs to the TRAFAC class translation factor GTPase superfamily. Classic translation factor GTPase family. EF-Tu/EF-1A subfamily. Monomer.

The protein resides in the cytoplasm. It carries out the reaction GTP + H2O = GDP + phosphate + H(+). GTP hydrolase that promotes the GTP-dependent binding of aminoacyl-tRNA to the A-site of ribosomes during protein biosynthesis. This chain is Elongation factor Tu, found in Streptococcus equi subsp. zooepidemicus (strain MGCS10565).